A 131-amino-acid chain; its full sequence is Ribosomally synthesized cyclic peptide phomopsin precursor gigA (131 aa).

The first 18 residues, 1–18, serve as a signal peptide directing secretion; it reads MQFTLIFFYATLAAFGLA. 5 propeptides span residues 19–38, 48–65, 75–92, 102–119, and 129–131; these read APSE…LDKR, ADLV…LDKR, ADMV…LDKR, ADMV…LAKR, and ADM.

In terms of processing, gigA is processed by several endopeptidases including kexin proteases to produce 2 identical copies of the nonaxapeptide Ile-Asn-Phe-Lys-Ile-Pro-Tyr-Thr-Gly, one copy of the nonaketide Ile-Gly-Phe-Lys-Leu-Pro-Tyr-Arg-Gly and one copy of the nonaketide Pro-Asn-Phe-Lys-Met-Pro-Tyr-Arg-Gly, that are further modified into phomapsins B, C and A, respectively. After being excised from the precursor peptide, the core peptides are cyclized and modified post-translationally by enzymes encoded within the gene cluster. Epichloecyclin biosynthesis requires only dimethylation of the side-chain amino group of the conserved lysine for completion.

It functions in the pathway mycotoxin biosynthesis. In terms of biological role, ribosomally synthesized cyclic peptide phomopsin precursor; part of the gene cluster that mediates the biosynthesis of the epichloecyclins, a group of nonapeptides, with a likely cyclic structure and dimethylation of the conserved lysine. The gigA translated product contains 4 repeated peptide embedding the nonapeptide Ile-Asn-Phe-Lys-Ile-Pro-Tyr-Thr-Gly in repeats 1 and 2, Ile-Gly-Phe-Lys-Leu-Pro-Tyr-Arg-Gly in repeat 3, and Pro-Asn-Phe-Lys-Met-Pro-Tyr-Arg-Gly in repeat 4 that are converted into epichloecyclins B, C and A, respectively. Moreover, removal of the last Gly residue in epichloecyclins B and C leads to epichloecyclins D and E, respectively. The protein is Ribosomally synthesized cyclic peptide phomopsin precursor gigA (nc25) of Epichloe festucae (strain Fl1).